The sequence spans 573 residues: Methionine--tRNA ligase (573 aa).

The 'HIGH' region signature appears at 10–20; it reads PYVNSVPHLGN. Zn(2+) is bound by residues cysteine 143, cysteine 146, cysteine 156, and cysteine 159. Residues 333-337 carry the 'KMSKS' region motif; that stretch reads KFSKS. Lysine 336 serves as a coordination point for ATP.

The protein belongs to the class-I aminoacyl-tRNA synthetase family. MetG type 1 subfamily. Zn(2+) serves as cofactor.

It is found in the cytoplasm. The enzyme catalyses tRNA(Met) + L-methionine + ATP = L-methionyl-tRNA(Met) + AMP + diphosphate. Its function is as follows. Is required not only for elongation of protein synthesis but also for the initiation of all mRNA translation through initiator tRNA(fMet) aminoacylation. This chain is Methionine--tRNA ligase, found in Saccharolobus solfataricus (strain ATCC 35092 / DSM 1617 / JCM 11322 / P2) (Sulfolobus solfataricus).